A 182-amino-acid polypeptide reads, in one-letter code: Adenine phosphoribosyltransferase 4 (182 aa).

The protein belongs to the purine/pyrimidine phosphoribosyltransferase family. As to quaternary structure, homodimer.

The protein resides in the cytoplasm. It catalyses the reaction AMP + diphosphate = 5-phospho-alpha-D-ribose 1-diphosphate + adenine. The protein operates within purine metabolism; AMP biosynthesis via salvage pathway; AMP from adenine: step 1/1. Functionally, catalyzes a salvage reaction resulting in the formation of AMP, that is energically less costly than de novo synthesis. May contribute to the recycling of adenine into adenylate nucleotides and the inactivation of cytokinins by phosphoribosylation. Possesses low activity toward adenine, but can efficiently convert cytokinins from free bases (active form) to the corresponding nucleotides (inactive form). This is Adenine phosphoribosyltransferase 4 (APT4) from Arabidopsis thaliana (Mouse-ear cress).